The primary structure comprises 359 residues: Peptide chain release factor 1 (359 aa).

Gln-235 is modified (N5-methylglutamine). Residues 283 to 309 (QKAESERSQARRSQVGSGDRSERIRTY) are disordered.

This sequence belongs to the prokaryotic/mitochondrial release factor family. Methylated by PrmC. Methylation increases the termination efficiency of RF1.

Its subcellular location is the cytoplasm. Functionally, peptide chain release factor 1 directs the termination of translation in response to the peptide chain termination codons UAG and UAA. The chain is Peptide chain release factor 1 from Brucella suis (strain ATCC 23445 / NCTC 10510).